We begin with the raw amino-acid sequence, 306 residues long: D-alanine--D-alanine ligase (306 aa).

The ATP-grasp domain occupies 102–300 (KHVAKAAGIP…FGEFLRWMVE (199 aa)). ATP is bound at residue 128 to 183 (PMKPPYVVKPVREGSSFGVVIVKEDQSHPPQVITSSEWRYGDRVMVERYIAGRELT). Asp-252, Glu-267, and Asn-269 together coordinate Mg(2+).

It belongs to the D-alanine--D-alanine ligase family. It depends on Mg(2+) as a cofactor. The cofactor is Mn(2+).

The protein resides in the cytoplasm. The enzyme catalyses 2 D-alanine + ATP = D-alanyl-D-alanine + ADP + phosphate + H(+). Its pathway is cell wall biogenesis; peptidoglycan biosynthesis. Cell wall formation. In Sinorhizobium fredii (strain NBRC 101917 / NGR234), this protein is D-alanine--D-alanine ligase.